The chain runs to 406 residues: Argininosuccinate synthase (406 aa).

Residues 11-19 (AYSGGLDTS) and A38 contribute to the ATP site. L-citrulline contacts are provided by Y91 and S96. G121 provides a ligand contact to ATP. 3 residues coordinate L-aspartate: T123, N127, and D128. Residue N127 coordinates L-citrulline. The L-citrulline site is built by R131, S182, S191, E267, and Y279.

This sequence belongs to the argininosuccinate synthase family. Type 1 subfamily. As to quaternary structure, homotetramer.

It is found in the cytoplasm. The catalysed reaction is L-citrulline + L-aspartate + ATP = 2-(N(omega)-L-arginino)succinate + AMP + diphosphate + H(+). Its pathway is amino-acid biosynthesis; L-arginine biosynthesis; L-arginine from L-ornithine and carbamoyl phosphate: step 2/3. In Rhodospirillum centenum (strain ATCC 51521 / SW), this protein is Argininosuccinate synthase.